The sequence spans 67 residues: uncharacterized protein (67 aa).

Transmembrane regions (helical) follow at residues 6-26 and 38-58; these read GQLW…CVLM and NNII…IIII.

The protein resides in the membrane. This is an uncharacterized protein from Dictyostelium discoideum (Social amoeba).